Consider the following 423-residue polypeptide: Gamma-glutamyl phosphate reductase 2 (423 aa).

This sequence belongs to the gamma-glutamyl phosphate reductase family.

It localises to the cytoplasm. It catalyses the reaction L-glutamate 5-semialdehyde + phosphate + NADP(+) = L-glutamyl 5-phosphate + NADPH + H(+). It participates in amino-acid biosynthesis; L-proline biosynthesis; L-glutamate 5-semialdehyde from L-glutamate: step 2/2. In terms of biological role, catalyzes the NADPH-dependent reduction of L-glutamate 5-phosphate into L-glutamate 5-semialdehyde and phosphate. The product spontaneously undergoes cyclization to form 1-pyrroline-5-carboxylate. This is Gamma-glutamyl phosphate reductase 2 from Bacillus licheniformis (strain ATCC 14580 / DSM 13 / JCM 2505 / CCUG 7422 / NBRC 12200 / NCIMB 9375 / NCTC 10341 / NRRL NRS-1264 / Gibson 46).